A 753-amino-acid chain; its full sequence is LIM domain and actin-binding protein 1 (753 aa).

M1 is subject to N-acetylmethionine. At S15 the chain carries Phosphoserine. The span at 46–56 (EEANMERKKNN) shows a compositional bias: basic and acidic residues. Disordered regions lie at residues 46-66 (EEAN…HFRR) and 82-186 (GAEF…TSGK). S132 bears the Phosphoserine mark. Positions 143–152 (PRSENSHDFK) are enriched in basic and acidic residues. The Required for interaction with NPC1L1 signature appears at 164 to 166 (CLG). Residues 167 to 177 (DSRHEAEKPET) are compositionally biased toward basic and acidic residues. Phosphoserine occurs at positions 225, 230, 242, and 263. Disordered regions lie at residues 276 to 326 (AAVS…VSTT) and 341 to 379 (TCNS…TAKK). Polar residues predominate over residues 278 to 291 (VSKQSSPASYTNEL). Over residues 292–305 (KTSESKTHKWEQKE) the composition is skewed to basic and acidic residues. A compositionally biased stretch (polar residues) spans 342-351 (CNSQVKSEAQ). Phosphoserine occurs at positions 348, 360, 367, and 372. Over residues 363-375 (ARTSSLPESSPSK) the composition is skewed to polar residues. The 61-residue stretch at 386 to 446 (ESCVECQKTV…KPHFNQLFKS (61 aa)) folds into the LIM zinc-binding domain. K437 is subject to N6-succinyllysine. A phosphoserine mark is found at S467, S485, and S488. 3 disordered regions span residues 467–493 (SDNE…GVED), 505–669 (SMEA…FELE), and 682–703 (EDDN…GWSG). The required for interaction with MYO5B stretch occupies residues 491-511 (VEDAPIAKVGVLAASMEAKAS). 2 stretches are compositionally biased toward basic and acidic residues: residues 512 to 525 (SQRE…ETKK) and 554 to 565 (WPPEDDVCKTEA). Residues 598 to 609 (SSIKSPKASSPS) are compositionally biased toward low complexity. S599, S602, S607, and S615 each carry phosphoserine. Residues 630-666 (MERKQTENARPSGEKENVGKSRWQGEEVPRSKDRSSF) show a composition bias toward basic and acidic residues. 3 positions are modified to phosphoserine: S692, S720, and S735.

In terms of assembly, interacts with NPC1L1; bridges NPC1L1 with MYO5B. Interacts with MYO5B; bridges MYO5B with NPC1L1. Interacts with PXN; this complex stabilizes actin dynamics. Binds to G-actin and F-actin. Interacts with LUZP1 (via C-terminus); both proteins restrict ciliation and may work together to regulate this process. Binds RAB40B (GTP-bound); interaction influences LIMA1 subcellular localization in lamellipodia during cell migration. Phosphorylation of the C-terminal region by MAPK1/MAPK3 reduces its association with F-actin and contributes to actin filament reorganization and enhances cell motility. Post-translationally, ubiquitinated by the ECS(RAB40B) complex leading to its degradation. In terms of tissue distribution, highly expressed in the small intestine, including the duodenum, jejunum, and ileum. Low expression in the liver and very low expressed in the heart, spleen, lung, brain, and pancreas. Isoform Alpha is highly expressed in embryos from day 7-11 and in adult spleen and lung. Isoform Beta expression is highest in adult kidney, testis, lung and liver, intermediate in heart, brain, spleen, skeletal muscle and low in embryos.

The protein resides in the cytoplasm. Its subcellular location is the cell junction. It localises to the focal adhesion. It is found in the cytoskeleton. The protein localises to the stress fiber. The protein resides in the cell membrane. Its subcellular location is the cell projection. It localises to the ruffle. It is found in the lamellipodium. Its function is as follows. Actin-binding protein involved in actin cytoskeleton regulation and dynamics. Increases the number and size of actin stress fibers and inhibits membrane ruffling. Inhibits actin filament depolymerization. Bundles actin filaments, delays filament nucleation and reduces formation of branched filaments. Acts as a negative regulator of primary cilium formation. Plays a role in cholesterol homeostasis. Influences plasma cholesterol levels through regulation of intestinal cholesterol absorption. May act as a scaffold protein by regulating NPC1L1 transportation, an essential protein for cholesterol absorption, to the plasma membrane by recruiting MYO5B to NPC1L1, and thus facilitates cholesterol uptake. In Mus musculus (Mouse), this protein is LIM domain and actin-binding protein 1 (Lima1).